A 106-amino-acid polypeptide reads, in one-letter code: MPAYAIYFLAALAEITGCFAFWSWLRLGKSALWLIPGMASLALFAWLLTMVDAAAAGRTYAAYGGVYIVASLSWLWLAEGVRPDHWDMTGAAVALAGSAIILAGPR.

A run of 4 helical transmembrane segments spans residues 5-25, 31-51, 61-81, and 85-105; these read AIYFLAALAEITGCFAFWSWL, ALWLIPGMASLALFAWLLTMV, AAYGGVYIVASLSWLWLAEGV, and HWDMTGAAVALAGSAIILAGP.

This sequence belongs to the UPF0060 family.

The protein resides in the cell inner membrane. This is UPF0060 membrane protein R01043 from Rhizobium meliloti (strain 1021) (Ensifer meliloti).